The chain runs to 92 residues: Alpha-conotoxin-like Rt20.1 (92 aa).

The signal sequence occupies residues 1–24; sequence MPKLEMMLLVLLILPLSYFSAAGG. Residues 25 to 45 constitute a propeptide that is removed on maturation; it reads QVVQGDLRSDVLARYLQRGDR. 4-carboxyglutamate is present on glutamate 49. Proline 55 is subject to 4-hydroxyproline. 4 disulfides stabilise this stretch: cysteine 63–cysteine 72, cysteine 68–cysteine 80, cysteine 73–cysteine 90, and cysteine 78–cysteine 92.

This sequence belongs to the conotoxin D superfamily. As to quaternary structure, hetero-, homo- or pseudo-homodimer (identical sequence, different post-translational modifications). Expressed by the venom duct.

Its subcellular location is the secreted. Functionally, alpha-conotoxins act on postsynaptic membranes, they bind to the nicotinic acetylcholine receptors (nAChR) and thus inhibit them. Through its two C-terminal domains, this homodimeric protein would bind to two nAChR allosteric sites, located outside the nAChR C-loop of the principal binding face and at the adjacent binding interface in a clockwise direction. This toxin specifically blocks mammalian neuronal nAChR of the alpha-7/CHRNA7, alpha-3-beta-2/CHRNA3-CHRNB2 and alpha-4-beta-2/CHRNA4-CHRNB2 subtypes. This Conus rattus (Rat cone) protein is Alpha-conotoxin-like Rt20.1.